The primary structure comprises 179 residues: Large ribosomal subunit protein uL6 (179 aa).

It belongs to the universal ribosomal protein uL6 family. Part of the 50S ribosomal subunit.

Functionally, this protein binds to the 23S rRNA, and is important in its secondary structure. It is located near the subunit interface in the base of the L7/L12 stalk, and near the tRNA binding site of the peptidyltransferase center. The polypeptide is Large ribosomal subunit protein uL6 (Chlorobium chlorochromatii (strain CaD3)).